A 330-amino-acid chain; its full sequence is Ribosomal RNA small subunit methyltransferase A (330 aa).

S-adenosyl-L-methionine contacts are provided by histidine 29, leucine 31, glycine 56, glutamate 77, and aspartate 98. A disordered region spans residues proline 115–glycine 158. Asparagine 177 contacts S-adenosyl-L-methionine.

The protein belongs to the class I-like SAM-binding methyltransferase superfamily. rRNA adenine N(6)-methyltransferase family. RsmA subfamily.

The protein resides in the cytoplasm. It catalyses the reaction adenosine(1518)/adenosine(1519) in 16S rRNA + 4 S-adenosyl-L-methionine = N(6)-dimethyladenosine(1518)/N(6)-dimethyladenosine(1519) in 16S rRNA + 4 S-adenosyl-L-homocysteine + 4 H(+). Its function is as follows. Specifically dimethylates two adjacent adenosines (A1518 and A1519) in the loop of a conserved hairpin near the 3'-end of 16S rRNA in the 30S particle. May play a critical role in biogenesis of 30S subunits. The protein is Ribosomal RNA small subunit methyltransferase A of Polaromonas sp. (strain JS666 / ATCC BAA-500).